We begin with the raw amino-acid sequence, 352 residues long: MAQTPAFNKPKVELHVHLDGAIKPETILYFGKKRGIALPADTVEELRNIIGMDKPLSLPGFLAKFDYYMPVIAGCREAIKRIAYEFVEMKAKEGVVYVEVRYSPHLLANSKVDPMPWNQTEGDVTPDDVVDLVNQGLQEGEQAFGIKVRSILCCMRHQPSWSLEVLELCKKYNQKTVVAMDLAGDETIEGSSLFPGHVEAYEGAVKNGIHRTVHAGEVGSPEVVREAVDILKTERVGHGYHTIEDEALYNRLLKENMHFEVCPWSSYLTGAWDPKTTHAVVRFKNDKANYSLNTDDPLIFKSTLDTDYQMTKKDMGFTEEEFKRLNINAAKSSFLPEEEKKELLERLYREYQ.

An N-acetylalanine modification is found at Ala2. Zn(2+) is bound by residues His15 and His17. Substrate contacts are provided by His17 and Asp19. Lys54 bears the N6-acetyllysine mark. Gly184 contacts substrate. Residue His214 coordinates Zn(2+). Catalysis depends on Glu217, which acts as the Proton donor. Lys232 carries the post-translational modification N6-acetyllysine. Asp295 is a Zn(2+) binding site. Asp296 lines the substrate pocket.

This sequence belongs to the metallo-dependent hydrolases superfamily. Adenosine and AMP deaminases family. As to quaternary structure, interacts with DPP4 (via extracellular domain). Interacts with PLG (via Kringle 4 domain); the interaction stimulates PLG activation when in complex with DPP4. Requires Zn(2+) as cofactor. Detected in brain neurons in the median emninence (at protein level). Expressed in secondary deciduum (at protein level). Found in all tissues, occurs in large amounts in T-lymphocytes and, at the time of weaning, in gastrointestinal tissues.

The protein localises to the cell membrane. It localises to the cell junction. It is found in the cytoplasmic vesicle lumen. The protein resides in the cytoplasm. Its subcellular location is the lysosome. It catalyses the reaction adenosine + H2O + H(+) = inosine + NH4(+). The enzyme catalyses 2'-deoxyadenosine + H2O + H(+) = 2'-deoxyinosine + NH4(+). It carries out the reaction cordycepin + H2O + H(+) = 3'-deoxyinosine + NH4(+). Catalyzes the hydrolytic deamination of adenosine and 2-deoxyadenosine. Plays an important role in purine metabolism and in adenosine homeostasis. Modulates signaling by extracellular adenosine, and so contributes indirectly to cellular signaling events. Acts as a positive regulator of T-cell coactivation, by binding DPP4. Its interaction with DPP4 regulates lymphocyte-epithelial cell adhesion. Enhances dendritic cell immunogenicity by affecting dendritic cell costimulatory molecule expression and cytokines and chemokines secretion. Enhances CD4+ T-cell differentiation and proliferation. Acts as a positive modulator of adenosine receptors ADORA1 and ADORA2A, by enhancing their ligand affinity via conformational change. Stimulates plasminogen activation. Plays a role in male fertility. Plays a protective role in early postimplantation embryonic development. Also responsible for the deamination of cordycepin (3'-deoxyadenosine), a fungal natural product that shows antitumor, antibacterial, antifungal, antivirus, and immune regulation properties. The polypeptide is Adenosine deaminase (Ada) (Mus musculus (Mouse)).